The sequence spans 593 residues: Vitamin H transporter (593 aa).

The Extracellular portion of the chain corresponds to 1–121 (MTISNKSWRS…TTQTKAERRL (121 aa)). Phosphoserine occurs at positions 32, 33, and 43. Residues 122 to 142 (LYKLDIIIALYFFMLCWSKSV) traverse the membrane as a helical segment. At 143-166 (DLNNYTNAYVSNMKEDLNMKGNDY) the chain is on the cytoplasmic side. Residues 167-187 (VYTSTIANVGAIVFQLPFMYL) form a helical membrane-spanning segment. Over 188–190 (LPR) the chain is Extracellular. A helical membrane pass occupies residues 191 to 211 (FPSHIILPVMDLGWTWFTFAC). Over 212-224 (YRANSLAELRAYR) the chain is Cytoplasmic. The helical transmembrane segment at 225–245 (FILSAFGAAYYPVSQYILGCW) threads the bilayer. The Extracellular portion of the chain corresponds to 246-291 (YAPDEINSRVCLFFCGQQLGSVTSGLLQSRIFKSLNGVHGLAGWRW). A helical membrane pass occupies residues 292–312 (MFLIDAIAISLPTAIIGFFVI). The Cytoplasmic portion of the chain corresponds to 313–361 (PGVPSKCYSLFLTDEEIRIARARNKRNQIKDGVDKSKLAPLWSRKLWKK). Residues 362-382 (VFCTPAFWVLVVFDTCSWNNM) traverse the membrane as a helical segment. The Extracellular portion of the chain corresponds to 383–408 (TAYSGSYTLWLKSNTKYSIAQVNNLS). A helical transmembrane segment spans residues 409 to 429 (VIPACLGFAYVIFCAFGADLF). Residues 430 to 432 (RCK) lie on the Cytoplasmic side of the membrane. A helical membrane pass occupies residues 433 to 453 (WIFMVFAAIMNTVSCALLIKW). Topologically, residues 454–460 (DIPSKAK) are extracellular. The chain crosses the membrane as a helical span at residues 461-481 (WYAFFTTYFSVAASPCLWSFI). The Cytoplasmic segment spans residues 482 to 492 (NDFLRFDPQVK). The helical transmembrane segment at 493 to 513 (AITWIAIYSFSQSTYAWIPTL) threads the bilayer. At 514–526 (AWPTVESPRFKTG) the chain is on the extracellular side. The helical transmembrane segment at 527 to 547 (YTVSLIFGAIYGLWTFVVLFF) threads the bilayer. Residues 548-593 (YKRNEKKHALGNGIILYDSNKGEELPEFVKKNMEERDGYYYLKRSS) are Cytoplasmic-facing.

This sequence belongs to the major facilitator superfamily. Allantoate permease family.

It is found in the cell membrane. In terms of biological role, involved in uptake of biotin with the concomitant entry of protons. This chain is Vitamin H transporter (VHT1), found in Saccharomyces cerevisiae (strain ATCC 204508 / S288c) (Baker's yeast).